The following is a 96-amino-acid chain: Phosphoribosyl-ATP pyrophosphatase (96 aa).

Belongs to the PRA-PH family.

The protein resides in the cytoplasm. The catalysed reaction is 1-(5-phospho-beta-D-ribosyl)-ATP + H2O = 1-(5-phospho-beta-D-ribosyl)-5'-AMP + diphosphate + H(+). It functions in the pathway amino-acid biosynthesis; L-histidine biosynthesis; L-histidine from 5-phospho-alpha-D-ribose 1-diphosphate: step 2/9. This chain is Phosphoribosyl-ATP pyrophosphatase, found in Methanococcus vannielii (strain ATCC 35089 / DSM 1224 / JCM 13029 / OCM 148 / SB).